Reading from the N-terminus, the 86-residue chain is U15-lycotoxin-Ls1d (86 aa).

A signal peptide spans 1-20 (MNSKIFAVLLLLGLLSCVLS). Positions 21-66 (DQYCPKSSITACKKMNIRNDCCKDDDCTGGSWCCATPCGNFCKYPT) constitute a WAP domain. Cystine bridges form between Cys-24/Cys-54, Cys-32/Cys-58, Cys-41/Cys-53, Cys-42/Cys-80, and Cys-47/Cys-62.

Belongs to the venom protein 11 family. 01 (wap-1) subfamily. Post-translationally, contains 5 disulfide bonds. In terms of tissue distribution, expressed by the venom gland.

The protein resides in the secreted. In terms of biological role, has antibacterial activity. The sequence is that of U15-lycotoxin-Ls1d from Lycosa singoriensis (Wolf spider).